A 168-amino-acid polypeptide reads, in one-letter code: Venom nerve growth factor (168 aa).

A signal peptide spans 1–18 (MSMLCYTLIIAFLIGIWA). Positions 19–123 (APKSEDNVSL…ADSLNRNIRA (105 aa)) are excised as a propeptide. N-linked (GlcNAc...) asparagine glycosylation occurs at N25. The disordered stretch occupies residues 48–70 (LKTSQNTDQHSPAPKKAEDQEFG). The N-linked (GlcNAc...) asparagine glycan is linked to N148.

Belongs to the NGF-beta family. As to quaternary structure, homodimer; non-covalently linked. In terms of tissue distribution, expressed by the venom gland.

The protein localises to the secreted. Functionally, nerve growth factor is important for the development and maintenance of the sympathetic and sensory nervous systems. It stimulates division and differentiation of sympathetic and embryonic sensory neurons as well as basal forebrain cholinergic neurons in the brain. Its relevance in the snake venom is not clear. However, it has been shown to inhibit metalloproteinase-dependent proteolysis of platelet glycoprotein Ib alpha, suggesting a metalloproteinase inhibition to prevent metalloprotease autodigestion and/or protection against prey proteases. The protein is Venom nerve growth factor of Echis ocellatus (Ocellated saw-scaled viper).